The chain runs to 329 residues: Prostaglandin reductase 1 (329 aa).

T18 is modified (phosphothreonine). S20 carries the post-translational modification Phosphoserine. Residues 152-155 (GAVG), K178, Y193, N217, 239-245 (CGAISTY), 270-272 (FIV), and N321 each bind NADP(+). K178 is subject to N6-(2-hydroxyisobutyryl)lysine; alternate. K178 is subject to N6-acetyllysine; alternate.

Belongs to the NADP-dependent oxidoreductase L4BD family. Monomer or homodimer. Ubiquitously distributed in various tissues and leukocytes, the kidney and liver had the highest enzyme activities.

It is found in the cytoplasm. The enzyme catalyses 13,14-dihydro-15-oxo-prostaglandin E1 + NADP(+) = 15-oxoprostaglandin E1 + NADPH + H(+). The catalysed reaction is 13,14-dihydro-15-oxo-prostaglandin E2 + NADP(+) = 15-oxoprostaglandin E2 + NADPH + H(+). It carries out the reaction 13,14-dihydro-15-oxo-prostaglandin E2 + NAD(+) = 15-oxoprostaglandin E2 + NADH + H(+). It catalyses the reaction 13,14-dihydro-15-oxo-prostaglandin F1alpha + NADP(+) = 15-oxoprostaglandin F1alpha + NADPH + H(+). The enzyme catalyses 13,14-dihydro-15-oxo-PGF2alpha + NADP(+) = 15-oxoprostaglandin F2alpha + NADPH + H(+). The catalysed reaction is leukotriene B4 + NADP(+) = 12-oxo-leukotriene B4 + NADPH + H(+). It carries out the reaction 20-hydroxy-leukotriene B4 + NADP(+) = 12-oxo-20-hydroxy-leukotriene B4 + NADPH + H(+). It catalyses the reaction 6-trans-leukotriene B4 + NADP(+) = 12-oxo-(5S)-hydroxy-(6E,8E,10E,14Z)-eicosatetraenoate + NADPH + H(+). The enzyme catalyses (5S,12S)-dihydroxy-(6E,10E,12E,14Z)-eicosatetraenoate + NADP(+) = 12-oxo-(5S)-hydroxy-(6E,8E,10E,14Z)-eicosatetraenoate + NADPH + H(+). The catalysed reaction is 15-oxo-(5S,6R)-dihydroxy-(7E,9E,11Z,13E)-eicosatetraenoate + NADH + H(+) = 15-oxo-(5S,6R)-dihydroxy-(7E,9E,11Z)-eicosatrienoate + NAD(+). It carries out the reaction an n-alkanal + NADP(+) = an alk-2-enal + NADPH + H(+). It catalyses the reaction hexanal + NADP(+) = (E)-hex-2-enal + NADPH + H(+). The enzyme catalyses octanal + NADP(+) = (2E)-octenal + NADPH + H(+). The catalysed reaction is decanal + NADP(+) = (2E)-decenal + NADPH + H(+). It carries out the reaction dodecanal + NADP(+) = (2E)-dodecenal + NADPH + H(+). It catalyses the reaction 4-hydroxynonanal + NADP(+) = (E)-4-hydroxynon-2-enal + NADPH + H(+). The enzyme catalyses pentan-2-one + NADP(+) = (E)-pent-3-en-2-one + NADPH + H(+). The catalysed reaction is nonan-2-one + NADP(+) = (3E)-nonen-2-one + NADPH + H(+). Down-regulated by nonsteroidal anti-inflammatory drugs diclofenac, indomethacin and niflumic acid. Its function is as follows. NAD(P)H-dependent oxidoreductase involved in metabolic inactivation of pro- and anti-inflammatory eicosanoids: prostaglandins (PG), leukotrienes (LT) and lipoxins (LX). Preferentially uses NADPH over NADH as cofactor. Catalyzes with high efficiency the reduction of the 13,14 double bond of 15-oxoPGs, including 15-oxo-PGE1, 15-oxo-PGE2, 15-oxo-PGF1-alpha and 15-oxo-PGF2-alpha. Catalyzes with lower efficiency the oxidation of the hydroxyl group at C12 of LTB4 and its derivatives, converting them into biologically less active 12-oxo-LTB4 metabolites. Reduces 15-oxo-LXA4 to 13,14 dihydro-15-oxo-LXA4 and may promote neutrophil recruitment at the inflammatory site. Plays a role in metabolic detoxification of alkenals and ketones. Reduces alpha,beta-unsaturated alkenals and ketones, particularly those with medium-chain length, showing highest affinity toward (2E)-decenal and (3E)-3-nonen-2-one. May inactivate 4-hydroxy-2-nonenal, a cytotoxic lipid constituent of oxidized low-density lipoprotein particles. In Sus scrofa (Pig), this protein is Prostaglandin reductase 1 (PTGR1).